A 457-amino-acid polypeptide reads, in one-letter code: Cell division protein FtsA (457 aa).

The protein belongs to the FtsA/MreB family. As to quaternary structure, self-interacts. Interacts with FtsZ.

It localises to the cell membrane. In terms of biological role, cell division protein that is involved in the assembly of the Z ring. May serve as a membrane anchor for the Z ring. Increased expression restores growth to a PBP2b (penA) deletion strain as well as mreCD and rodA deletions, but not gpsB or rodZ deletions. Does not restore wild-type cell morphology to the penA deletion. This Streptococcus pneumoniae serotype 2 (strain D39 / NCTC 7466) protein is Cell division protein FtsA.